A 1404-amino-acid polypeptide reads, in one-letter code: MKDLLKFLKQQSKTEEFDGIKIGLASPDLIRSWSFGEVKKPETINYRTFKPEREGLFCARIFGPVKDYECLCGKYKRLKHRGVICEKCGVEVTQTKVRRERMGHIDLASPVAHIWFLKSLPSRIGLMLDMTLRDIERVLYFESFVVIEPGMTSLERGQMLTEENYLDALEEYGDEFDAKMGAEAVLELLRAIDLEKEIEMMREELPSINSETRRKKVTKRLKLVEAFFTSGNKPEWMILKVLPVLPPDLRPLVPLDGGRFATSDLNDLYRRVINRNNRLKRLLDLAAPDIIVRNEKRMLQESVDALLDNGRRGRAITGSNKRPLKSLADMIKGKQGRFRQNLLGKRVDYSGRSVITVGPTLRLHQCGLPKKMALELFKPFIYGKLEGRGLATTIKAAKKMVEREVPEVWDVLDDVIREHPVMLNRAPTLHRLGIQAFEPVLIEGKAIQLHPLVCAAYNADFDGDQMAVHVPLTLEAQLEARSLMMSTNNILSPANGEPVITPSQDVVLGLYYTSRERINGKGEGMAFSDVAEAEKAYRTGVAELHARVKVRITETATNEAGEKVKTRRIVDTTVGRALLSQILPKGLSYDLVNQNMGKKQISKLLNTCYRQLGLKDTVIFADQLMYTGFHFATISGASVGIDDMVIPDEKYTLVADAEAEVLEIQEQFQSGLVTAGERYNKVIDIWASANEKVSKAMMANLSKETVINRDGEEEQQESFNSIYMMADSGARGSAAQIRQLAGMRGLMAKPDGSIIETPIVANFREGLNVSQYFISTHGARKGLADTALKTANSGYLTRRLVDVAQDLVVIEDDCGTFEGLTMKPLIEGGDVVEPLRERVLGRVVAQDVFKPGTAEVLVPRNTLLDEAWCDIIEDNSIDEMIVRSVISCDTDFGVCKFCYGRDLARGHIINQGEAIGVVAAQSIGEPGTQLTMRTFHIGGAASRASAENNVQVKNSGTLKLHNAKFVTNSNGKLVIVSRSSELAIIDELGREKERYKVPYGTVLEKLEDDGVAAGEIIAKWDPHTHPIITEVAGSIKFVDMIEGVTMTRQTDELTGLSSIVVLEVGQRPTAGKEMRPMIRLVAADGSDLMIPGTEVPAQYFLPGHAIVNLDDNAPINVGDALARIPQESSKTRDITGGLPRVADLFEARKPKEPAILAEVSGTISFGKETKGKRRLVITPADGGEHYEEMIPKWRNLNVFEGEKVERGEVIADGAEAAHDILRLRGIHNVANYIVNEVQDVYRLQGVKINDKHIEVIIRQMLRKCEIVDAGDSEFLPGEQAEVSRVKIANRELEAQGKQPATFERELLGITKASLATESFISAASFQETTRVLTEAAVGGKSDKLRGLKENVIVGRLIPAGTGYSYHQKRAEAAAKPAVTEATSISASEAEQNLADLLNLAGSND.

Positions 70, 72, 85, and 88 each coordinate Zn(2+). Mg(2+)-binding residues include Asp-460, Asp-462, and Asp-464. Zn(2+) is bound by residues Cys-814, Cys-888, Cys-895, and Cys-898.

It belongs to the RNA polymerase beta' chain family. The RNAP catalytic core consists of 2 alpha, 1 beta, 1 beta' and 1 omega subunit. When a sigma factor is associated with the core the holoenzyme is formed, which can initiate transcription. Mg(2+) serves as cofactor. It depends on Zn(2+) as a cofactor.

It carries out the reaction RNA(n) + a ribonucleoside 5'-triphosphate = RNA(n+1) + diphosphate. DNA-dependent RNA polymerase catalyzes the transcription of DNA into RNA using the four ribonucleoside triphosphates as substrates. The polypeptide is DNA-directed RNA polymerase subunit beta' (Shewanella halifaxensis (strain HAW-EB4)).